Reading from the N-terminus, the 53-residue chain is Large ribosomal subunit protein eL40 (53 aa).

It belongs to the eukaryotic ribosomal protein eL40 family.

The chain is Large ribosomal subunit protein eL40 from Pyrobaculum calidifontis (strain DSM 21063 / JCM 11548 / VA1).